Consider the following 432-residue polypeptide: Non-peptidase homolog YmxG (432 aa).

Residues 1-20 form the signal peptide; it reads MKKFLITLLLGVFMGLQASA.

The protein belongs to the peptidase M16 family.

Its subcellular location is the secreted. Functionally, may contribute to the full activity of the protease PqqE. This chain is Non-peptidase homolog YmxG, found in Helicobacter pylori (strain ATCC 700392 / 26695) (Campylobacter pylori).